The chain runs to 440 residues: Protein disulfide-isomerase 2-3 (440 aa).

Positions 1–24 are cleaved as a signal peptide; the sequence is MYKSPLTLLTLLTICFGFFDLSSA. 2 Thioredoxin domains span residues 25–136 and 154–269; these read LYGS…KQIK and SKEK…ELVE. Active-site nucleophile residues include Cys60 and Cys63. A disulfide bond links Cys60 and Cys63. Residues 143 to 163 are disordered; it reads LEGKSKPTGGGSKEKKSEPSA. An N-linked (GlcNAc...) asparagine glycan is attached at Asn168. Active-site nucleophile residues include Cys192 and Cys195. An intrachain disulfide couples Cys192 to Cys195. The Prevents secretion from ER motif lies at 437–440; it reads KDEL.

This sequence belongs to the protein disulfide isomerase family. Widely expressed.

The protein localises to the endoplasmic reticulum lumen. The enzyme catalyses Catalyzes the rearrangement of -S-S- bonds in proteins.. In terms of biological role, acts as a protein-folding catalyst that interacts with nascent polypeptides to catalyze the formation, isomerization, and reduction or oxidation of disulfide bonds. The chain is Protein disulfide-isomerase 2-3 (PDIL2-3) from Arabidopsis thaliana (Mouse-ear cress).